The primary structure comprises 209 residues: Protein-L-isoaspartate O-methyltransferase (209 aa).

S55 is an active-site residue.

This sequence belongs to the methyltransferase superfamily. L-isoaspartyl/D-aspartyl protein methyltransferase family.

It is found in the cytoplasm. It catalyses the reaction [protein]-L-isoaspartate + S-adenosyl-L-methionine = [protein]-L-isoaspartate alpha-methyl ester + S-adenosyl-L-homocysteine. Functionally, catalyzes the methyl esterification of L-isoaspartyl residues in peptides and proteins that result from spontaneous decomposition of normal L-aspartyl and L-asparaginyl residues. It plays a role in the repair and/or degradation of damaged proteins. This chain is Protein-L-isoaspartate O-methyltransferase, found in Anaeromyxobacter dehalogenans (strain 2CP-1 / ATCC BAA-258).